Consider the following 382-residue polypeptide: Putative 12-oxophytodienoate reductase 3 (382 aa).

FMN contacts are provided by residues 37 to 39 (PLT), A70, and Q112. The segment covering 120–138 (STNDQQPNGQAPISSTDKQ) has biased composition (polar residues). The tract at residues 120–147 (STNDQQPNGQAPISSTDKQITPDDSHTV) is disordered. Residue 184–187 (HGAH) participates in substrate binding. The active-site Proton donor is the Y189. R236 contacts FMN. R277 is a substrate binding site. Residues G307 and 328-329 (GR) contribute to the FMN site.

It belongs to the NADH:flavin oxidoreductase/NADH oxidase family. FMN serves as cofactor.

In terms of biological role, putative oxophytodienoate reductase that may be involved in the biosynthesis or metabolism of oxylipin signaling molecules. In Oryza sativa subsp. japonica (Rice), this protein is Putative 12-oxophytodienoate reductase 3 (OPR3).